The chain runs to 186 residues: Ribosome-recycling factor (186 aa).

It belongs to the RRF family.

Its subcellular location is the cytoplasm. Functionally, responsible for the release of ribosomes from messenger RNA at the termination of protein biosynthesis. May increase the efficiency of translation by recycling ribosomes from one round of translation to another. This Methylibium petroleiphilum (strain ATCC BAA-1232 / LMG 22953 / PM1) protein is Ribosome-recycling factor.